Reading from the N-terminus, the 272-residue chain is Insertion element IS600 uncharacterized 31 kDa protein (272 aa).

Residues 105–268 (APTAPNQVWV…SPAAFREKYH (164 aa)) form the Integrase catalytic domain.

The polypeptide is Insertion element IS600 uncharacterized 31 kDa protein (Shigella sonnei).